The primary structure comprises 633 residues: Probable potassium transport system protein Kup (633 aa).

Transmembrane regions (helical) follow at residues 19 to 39, 61 to 81, 112 to 132, 148 to 168, 179 to 199, 217 to 237, 258 to 278, 290 to 310, 348 to 368, 380 to 400, 405 to 425, and 430 to 450; these read LGML…SPLY, ILAL…VLFI, VLVI…MITP, SGLE…LFLI, LFGP…INGI, FFIV…LALT, WFAL…ALLL, LLAP…ATVI, IYIG…VLGF, VAVT…MLLL, PVLA…FFAA, and IFQG…LMTT.

The protein belongs to the HAK/KUP transporter (TC 2.A.72) family.

It is found in the cell inner membrane. The catalysed reaction is K(+)(in) + H(+)(in) = K(+)(out) + H(+)(out). In terms of biological role, transport of potassium into the cell. Likely operates as a K(+):H(+) symporter. This is Probable potassium transport system protein Kup from Pseudomonas fluorescens (strain ATCC BAA-477 / NRRL B-23932 / Pf-5).